The primary structure comprises 1017 residues: Disease resistance protein RML1B (1017 aa).

In terms of domain architecture, TIR spans 12–176; sequence YKFNVFASFH…KIARDVLDKL (165 aa). Residue glutamate 87 is part of the active site. Positions 191–447 constitute an NB-ARC domain; it reads EAHLREIKSL…HIAIFFNKED (257 aa). LRR repeat units lie at residues 539-562, 583-605, 606-628, 629-652, 654-675, 676-698, 699-724, 738-760, 761-782, and 784-809; these read ISRI…QFLK, PCLL…TFNP, EHLV…TQPL, KNLK…SNAT, LEYL…ISHL, HKLE…HMNL, ESLQ…NIRY, CPGL…THLP, TSLT…CFKS, and HQLK…SLLT.

The enzyme catalyses NAD(+) + H2O = ADP-D-ribose + nicotinamide + H(+). Functionally, TIR-NB-LRR receptor-like protein that confers resistance to the pathogen Leptosphaeria maculans (blackleg disease). The chain is Disease resistance protein RML1B from Arabidopsis thaliana (Mouse-ear cress).